We begin with the raw amino-acid sequence, 231 residues long: Large ribosomal subunit protein uL1 (231 aa).

The protein belongs to the universal ribosomal protein uL1 family. As to quaternary structure, part of the 50S ribosomal subunit.

Binds directly to 23S rRNA. The L1 stalk is quite mobile in the ribosome, and is involved in E site tRNA release. Functionally, protein L1 is also a translational repressor protein, it controls the translation of the L11 operon by binding to its mRNA. The sequence is that of Large ribosomal subunit protein uL1 from Lactobacillus delbrueckii subsp. bulgaricus (strain ATCC 11842 / DSM 20081 / BCRC 10696 / JCM 1002 / NBRC 13953 / NCIMB 11778 / NCTC 12712 / WDCM 00102 / Lb 14).